The following is a 440-amino-acid chain: Ribulose bisphosphate carboxylase large chain (440 aa).

K4 is modified (N6,N6,N6-trimethyllysine). Residues N113 and T163 each contribute to the substrate site. The active-site Proton acceptor is K165. K167 serves as a coordination point for substrate. Positions 191, 193, and 194 each coordinate Mg(2+). Position 191 is an N6-carboxylysine (K191). H284 functions as the Proton acceptor in the catalytic mechanism. Residues R285, H317, and S369 each coordinate substrate.

Belongs to the RuBisCO large chain family. Type I subfamily. As to quaternary structure, heterohexadecamer of 8 large chains and 8 small chains; disulfide-linked. The disulfide link is formed within the large subunit homodimers. Requires Mg(2+) as cofactor. In terms of processing, the disulfide bond which can form in the large chain dimeric partners within the hexadecamer appears to be associated with oxidative stress and protein turnover.

The protein localises to the plastid. It is found in the chloroplast. The catalysed reaction is 2 (2R)-3-phosphoglycerate + 2 H(+) = D-ribulose 1,5-bisphosphate + CO2 + H2O. It catalyses the reaction D-ribulose 1,5-bisphosphate + O2 = 2-phosphoglycolate + (2R)-3-phosphoglycerate + 2 H(+). Its function is as follows. RuBisCO catalyzes two reactions: the carboxylation of D-ribulose 1,5-bisphosphate, the primary event in carbon dioxide fixation, as well as the oxidative fragmentation of the pentose substrate in the photorespiration process. Both reactions occur simultaneously and in competition at the same active site. This Onoclea sensibilis (Sensitive fern) protein is Ribulose bisphosphate carboxylase large chain.